A 159-amino-acid polypeptide reads, in one-letter code: SsrA-binding protein (159 aa).

Residues 140–150 show a composition bias toward basic and acidic residues; the sequence is RATEKERDWNR. The disordered stretch occupies residues 140–159; sequence RATEKERDWNRQKQRVLRQR.

The protein belongs to the SmpB family.

The protein localises to the cytoplasm. Required for rescue of stalled ribosomes mediated by trans-translation. Binds to transfer-messenger RNA (tmRNA), required for stable association of tmRNA with ribosomes. tmRNA and SmpB together mimic tRNA shape, replacing the anticodon stem-loop with SmpB. tmRNA is encoded by the ssrA gene; the 2 termini fold to resemble tRNA(Ala) and it encodes a 'tag peptide', a short internal open reading frame. During trans-translation Ala-aminoacylated tmRNA acts like a tRNA, entering the A-site of stalled ribosomes, displacing the stalled mRNA. The ribosome then switches to translate the ORF on the tmRNA; the nascent peptide is terminated with the 'tag peptide' encoded by the tmRNA and targeted for degradation. The ribosome is freed to recommence translation, which seems to be the essential function of trans-translation. This Alcanivorax borkumensis (strain ATCC 700651 / DSM 11573 / NCIMB 13689 / SK2) protein is SsrA-binding protein.